The chain runs to 170 residues: ATP synthase subunit b (170 aa).

A helical membrane pass occupies residues 22–44; sequence IINLAVVVFGLYKFLPGFLGKIL.

Belongs to the ATPase B chain family. In terms of assembly, F-type ATPases have 2 components, F(1) - the catalytic core - and F(0) - the membrane proton channel. F(1) has five subunits: alpha(3), beta(3), gamma(1), delta(1), epsilon(1). F(0) has four main subunits: a(1), b(1), b'(1) and c(10-14). The alpha and beta chains form an alternating ring which encloses part of the gamma chain. F(1) is attached to F(0) by a central stalk formed by the gamma and epsilon chains, while a peripheral stalk is formed by the delta, b and b' chains.

It localises to the cellular thylakoid membrane. In terms of biological role, f(1)F(0) ATP synthase produces ATP from ADP in the presence of a proton or sodium gradient. F-type ATPases consist of two structural domains, F(1) containing the extramembraneous catalytic core and F(0) containing the membrane proton channel, linked together by a central stalk and a peripheral stalk. During catalysis, ATP synthesis in the catalytic domain of F(1) is coupled via a rotary mechanism of the central stalk subunits to proton translocation. Its function is as follows. Component of the F(0) channel, it forms part of the peripheral stalk, linking F(1) to F(0). The protein is ATP synthase subunit b of Prochlorococcus marinus (strain NATL1A).